The sequence spans 315 residues: Methionyl-tRNA formyltransferase (315 aa).

The N-terminal domain stretch occupies residues 2–189 (SESLRIIFAG…LITTLKQLAD (188 aa)). 113–116 (SLLP) provides a ligand contact to (6S)-5,6,7,8-tetrahydrofolate. The interval 210–315 (KEEARIDWSL…EWFVPGNRLV (106 aa)) is C-terminal domain.

The protein belongs to the Fmt family. Monomer.

It carries out the reaction L-methionyl-tRNA(fMet) + (6R)-10-formyltetrahydrofolate = N-formyl-L-methionyl-tRNA(fMet) + (6S)-5,6,7,8-tetrahydrofolate + H(+). Activity is optimum in the presence of Mg(2+) and K(+). Functionally, attaches a formyl group to the free amino group of methionyl-tRNA(fMet). The formyl group appears to play a dual role in the initiator identity of N-formylmethionyl-tRNA by promoting its recognition by IF2 and preventing the misappropriation of this tRNA by the elongation apparatus. This Escherichia coli (strain K12) protein is Methionyl-tRNA formyltransferase.